A 76-amino-acid polypeptide reads, in one-letter code: Acyl carrier protein (76 aa).

Residues 1-76 (MDTFESVKAV…DVVAYIEANK (76 aa)) enclose the Carrier domain. At S36 the chain carries O-(pantetheine 4'-phosphoryl)serine.

The protein belongs to the acyl carrier protein (ACP) family. 4'-phosphopantetheine is transferred from CoA to a specific serine of apo-ACP by AcpS. This modification is essential for activity because fatty acids are bound in thioester linkage to the sulfhydryl of the prosthetic group.

The protein resides in the cytoplasm. Its pathway is lipid metabolism; fatty acid biosynthesis. Functionally, carrier of the growing fatty acid chain in fatty acid biosynthesis. This Helicobacter hepaticus (strain ATCC 51449 / 3B1) protein is Acyl carrier protein.